We begin with the raw amino-acid sequence, 214 residues long: Thymidylate kinase (214 aa).

11 to 18 (GPEGAGKT) serves as a coordination point for ATP.

This sequence belongs to the thymidylate kinase family.

The enzyme catalyses dTMP + ATP = dTDP + ADP. Functionally, phosphorylation of dTMP to form dTDP in both de novo and salvage pathways of dTTP synthesis. This chain is Thymidylate kinase, found in Leuconostoc citreum (strain KM20).